We begin with the raw amino-acid sequence, 166 residues long: 16S rRNA aminocarboxypropyltransferase (166 aa).

Residues Thr-17, Ile-62, Leu-84, Tyr-99, and Ser-103 each contribute to the S-adenosyl-L-methionine site.

Belongs to the TDD superfamily. TSR3 family.

The protein resides in the cytoplasm. It catalyses the reaction an N(1)-methylpseudouridine in rRNA + S-adenosyl-L-methionine = N(1)-methyl-N(3)-[(3S)-3-amino-3-carboxypropyl]pseudouridine in rRNA + S-methyl-5'-thioadenosine + H(+). Its function is as follows. Aminocarboxypropyltransferase that catalyzes the aminocarboxypropyl transfer on pseudouridine corresponding to position 914 in M.jannaschii 16S rRNA. It constitutes the last step in biosynthesis of the hypermodified N1-methyl-N3-(3-amino-3-carboxypropyl) pseudouridine (m1acp3-Psi). The sequence is that of 16S rRNA aminocarboxypropyltransferase from Saccharolobus islandicus (strain M.16.27) (Sulfolobus islandicus).